The chain runs to 182 residues: NADH-quinone oxidoreductase subunit I (182 aa).

2 consecutive 4Fe-4S ferredoxin-type domains span residues 52-82 (LTRDPDGEERCVACNLCAVACPVGCISLQKA) and 92-121 (DFFRINFSRCIFCGLCEEACPTTAIQLTPD). Residues Cys-62, Cys-65, Cys-68, Cys-72, Cys-101, Cys-104, Cys-107, and Cys-111 each contribute to the [4Fe-4S] cluster site.

This sequence belongs to the complex I 23 kDa subunit family. NDH-1 is composed of 13 different subunits. Subunits NuoA, H, J, K, L, M, N constitute the membrane sector of the complex. [4Fe-4S] cluster is required as a cofactor.

The protein localises to the cell inner membrane. The enzyme catalyses a quinone + NADH + 5 H(+)(in) = a quinol + NAD(+) + 4 H(+)(out). In terms of biological role, NDH-1 shuttles electrons from NADH, via FMN and iron-sulfur (Fe-S) centers, to quinones in the respiratory chain. The immediate electron acceptor for the enzyme in this species is believed to be ubiquinone. Couples the redox reaction to proton translocation (for every two electrons transferred, four hydrogen ions are translocated across the cytoplasmic membrane), and thus conserves the redox energy in a proton gradient. This chain is NADH-quinone oxidoreductase subunit I, found in Pseudomonas fluorescens (strain ATCC BAA-477 / NRRL B-23932 / Pf-5).